The sequence spans 359 residues: UDP-N-acetylglucosamine--N-acetylmuramyl-(pentapeptide) pyrophosphoryl-undecaprenol N-acetylglucosamine transferase (359 aa).

Residues 15–17 (TGG), N127, R166, S191, I245, 264–269 (ALTVSE), and Q290 each bind UDP-N-acetyl-alpha-D-glucosamine.

This sequence belongs to the glycosyltransferase 28 family. MurG subfamily.

It is found in the cell inner membrane. The enzyme catalyses di-trans,octa-cis-undecaprenyl diphospho-N-acetyl-alpha-D-muramoyl-L-alanyl-D-glutamyl-meso-2,6-diaminopimeloyl-D-alanyl-D-alanine + UDP-N-acetyl-alpha-D-glucosamine = di-trans,octa-cis-undecaprenyl diphospho-[N-acetyl-alpha-D-glucosaminyl-(1-&gt;4)]-N-acetyl-alpha-D-muramoyl-L-alanyl-D-glutamyl-meso-2,6-diaminopimeloyl-D-alanyl-D-alanine + UDP + H(+). The protein operates within cell wall biogenesis; peptidoglycan biosynthesis. Its function is as follows. Cell wall formation. Catalyzes the transfer of a GlcNAc subunit on undecaprenyl-pyrophosphoryl-MurNAc-pentapeptide (lipid intermediate I) to form undecaprenyl-pyrophosphoryl-MurNAc-(pentapeptide)GlcNAc (lipid intermediate II). The polypeptide is UDP-N-acetylglucosamine--N-acetylmuramyl-(pentapeptide) pyrophosphoryl-undecaprenol N-acetylglucosamine transferase (Pseudomonas putida (strain GB-1)).